Consider the following 266-residue polypeptide: Undecaprenyl-diphosphatase (266 aa).

A run of 7 helical transmembrane segments spans residues Asn41–Trp61, Thr80–Phe100, Ile107–Ala127, Ile140–Leu160, Leu180–Val200, Ile213–Cys233, and Leu245–Leu265.

Belongs to the UppP family.

Its subcellular location is the cell inner membrane. The enzyme catalyses di-trans,octa-cis-undecaprenyl diphosphate + H2O = di-trans,octa-cis-undecaprenyl phosphate + phosphate + H(+). Catalyzes the dephosphorylation of undecaprenyl diphosphate (UPP). Confers resistance to bacitracin. The chain is Undecaprenyl-diphosphatase from Parabacteroides distasonis (strain ATCC 8503 / DSM 20701 / CIP 104284 / JCM 5825 / NCTC 11152).